Reading from the N-terminus, the 210-residue chain is ATP-dependent Clp protease proteolytic subunit (210 aa).

S107 (nucleophile) is an active-site residue. H132 is an active-site residue.

Belongs to the peptidase S14 family. In terms of assembly, fourteen ClpP subunits assemble into 2 heptameric rings which stack back to back to give a disk-like structure with a central cavity, resembling the structure of eukaryotic proteasomes.

The protein resides in the cytoplasm. The catalysed reaction is Hydrolysis of proteins to small peptides in the presence of ATP and magnesium. alpha-casein is the usual test substrate. In the absence of ATP, only oligopeptides shorter than five residues are hydrolyzed (such as succinyl-Leu-Tyr-|-NHMec, and Leu-Tyr-Leu-|-Tyr-Trp, in which cleavage of the -Tyr-|-Leu- and -Tyr-|-Trp bonds also occurs).. Functionally, cleaves peptides in various proteins in a process that requires ATP hydrolysis. Has a chymotrypsin-like activity. Plays a major role in the degradation of misfolded proteins. This chain is ATP-dependent Clp protease proteolytic subunit, found in Chromobacterium violaceum (strain ATCC 12472 / DSM 30191 / JCM 1249 / CCUG 213 / NBRC 12614 / NCIMB 9131 / NCTC 9757 / MK).